The sequence spans 886 residues: Protein translocase subunit SecA (886 aa).

ATP-binding positions include Q81, 99 to 103 (GEGKT), and D489.

It belongs to the SecA family.

The protein localises to the plastid. It is found in the chloroplast stroma. It localises to the chloroplast thylakoid membrane. It catalyses the reaction ATP + H2O + cellular proteinSide 1 = ADP + phosphate + cellular proteinSide 2.. In terms of biological role, has a central role in coupling the hydrolysis of ATP to the transfer of proteins across the thylakoid membrane. In Phaeodactylum tricornutum (strain CCAP 1055/1), this protein is Protein translocase subunit SecA.